A 972-amino-acid chain; its full sequence is Serine/threonine-protein kinase ATG1 (972 aa).

Positions 18–319 (YVVEKEIGRG…FTEFFSNGLV (302 aa)) constitute a Protein kinase domain. ATP-binding positions include 24-32 (IGRGSFAVV) and Lys48. The active-site Proton acceptor is Asp166. Disordered regions lie at residues 359–394 (KRASPIRLGDSCTLRGPCESPQGADPYPQDNTQSDQ), 424–444 (YNNQEERSNEERQFGQVSNGR), 467–506 (ALQSHSHVAAKQIPDKDSKSSVSCQKHAASAPTKNDHRTT), 562–605 (ASQA…SRRP), and 743–764 (DDEEDDIEHSPGAETYRKNSSG). Residues 424–436 (YNNQEERSNEERQ) show a composition bias toward basic and acidic residues. Over residues 562 to 584 (ASQALQMARHSSTSVSAANTAKQ) the composition is skewed to polar residues. Residues 585–605 (TLLRRNSRTLSSSGASTSRRP) show a composition bias toward low complexity. Residues 750–759 (EHSPGAETYR) show a composition bias toward basic and acidic residues.

This sequence belongs to the protein kinase superfamily. Ser/Thr protein kinase family. APG1/unc-51/ULK1 subfamily. As to quaternary structure, homodimer. Forms a ternary complex with ATG13 and ATG17.

The protein localises to the cytoplasm. It is found in the preautophagosomal structure membrane. It catalyses the reaction L-seryl-[protein] + ATP = O-phospho-L-seryl-[protein] + ADP + H(+). The catalysed reaction is L-threonyl-[protein] + ATP = O-phospho-L-threonyl-[protein] + ADP + H(+). Serine/threonine protein kinase involved in the cytoplasm to vacuole transport (Cvt) and found to be essential in autophagy, where it is required for the formation of autophagosomes. Involved in the clearance of protein aggregates which cannot be efficiently cleared by the proteasome. Required for selective autophagic degradation of the nucleus (nucleophagy) as well as for mitophagy which contributes to regulate mitochondrial quantity and quality by eliminating the mitochondria to a basal level to fulfill cellular energy requirements and preventing excess ROS production. Also involved in endoplasmic reticulum-specific autophagic process, in selective removal of ER-associated degradation (ERAD) substrates. Plays a key role in ATG9 and ATG23 cycling through the pre-autophagosomal structure and is necessary to promote ATG18 binding to ATG9 through phosphorylation of ATG9. Catalyzes phosphorylation of ATG4, decreasing the interaction between ATG4 and ATG8 and impairing deconjugation of PE-conjugated forms of ATG8. This is Serine/threonine-protein kinase ATG1 from Eremothecium gossypii (strain ATCC 10895 / CBS 109.51 / FGSC 9923 / NRRL Y-1056) (Yeast).